Reading from the N-terminus, the 450-residue chain is Growth/differentiation factor 7 (450 aa).

Residues 1-19 form the signal peptide; sequence MDLSAAAALCLWLLSACRP. A propeptide spanning residues 20–321 is cleaved from the precursor; the sequence is RDGLEAAAVL…AVIGGRRRRR (302 aa). The N-linked (GlcNAc...) asparagine glycan is linked to asparagine 83. The disordered stretch occupies residues 296 to 349; that stretch reads ASEPLPDPGTGTASPRAVIGGRRRRRTALAGTRTAQGSGGGAGRGHGRRGRSRC. Residues 340-349 show a composition bias toward basic residues; it reads GHGRRGRSRC. 3 disulfide bridges follow: cysteine 349/cysteine 415, cysteine 378/cysteine 447, and cysteine 382/cysteine 449.

The protein belongs to the TGF-beta family. As to quaternary structure, homodimer; disulfide-linked.

The protein localises to the secreted. In terms of biological role, may play an active role in the motor area of the primate neocortex. The sequence is that of Growth/differentiation factor 7 (GDF7) from Homo sapiens (Human).